A 256-amino-acid polypeptide reads, in one-letter code: MDNAIFPNKFKAALAAHQVQIGCWCALANPISTEVLGLAGFDWLVLDAEHAPNDVTTLIPQLMALKGSSSAQVVRVPTNEPIIIKRMLDIGFYNFLVPFVETAEQAAQAVASTRYPPEGIRGVSVSHRGNMFGTVPDYFAQSNKNISILVQIESQTGVDNVEAIAATEGVDGVFVGPSDLAAALGHLGNASHPEVQRAIQHIFASAKKHGKPSGILAPVEADARRYLEWGATFVAVGSDLGVFRSATQKLADAFKK.

His-50 serves as the catalytic Proton acceptor. Gln-151 contributes to the substrate binding site. Residue Glu-153 participates in Mg(2+) binding. Residues Ser-178 and Asp-179 each contribute to the substrate site. Mg(2+) is bound at residue Asp-179.

This sequence belongs to the HpcH/HpaI aldolase family. KDGluc aldolase subfamily. As to quaternary structure, homohexamer; trimer of dimers. It depends on Mg(2+) as a cofactor.

It catalyses the reaction 5-dehydro-4-deoxy-D-glucarate = 2-hydroxy-3-oxopropanoate + pyruvate. The catalysed reaction is 2-dehydro-3-deoxy-D-glucarate = 2-hydroxy-3-oxopropanoate + pyruvate. Its pathway is carbohydrate acid metabolism; galactarate degradation; D-glycerate from galactarate: step 2/3. Its function is as follows. Catalyzes the reversible retro-aldol cleavage of both 5-keto-4-deoxy-D-glucarate and 2-keto-3-deoxy-D-glucarate to pyruvate and tartronic semialdehyde. The sequence is that of 5-keto-4-deoxy-D-glucarate aldolase from Klebsiella pneumoniae subsp. pneumoniae (strain ATCC 700721 / MGH 78578).